Reading from the N-terminus, the 145-residue chain is Large ribosomal subunit protein uL11 (145 aa).

Belongs to the universal ribosomal protein uL11 family. As to quaternary structure, part of the ribosomal stalk of the 50S ribosomal subunit. Interacts with L10 and the large rRNA to form the base of the stalk. L10 forms an elongated spine to which L12 dimers bind in a sequential fashion forming a multimeric L10(L12)X complex. One or more lysine residues are methylated.

Functionally, forms part of the ribosomal stalk which helps the ribosome interact with GTP-bound translation factors. The protein is Large ribosomal subunit protein uL11 of Corynebacterium glutamicum (strain ATCC 13032 / DSM 20300 / JCM 1318 / BCRC 11384 / CCUG 27702 / LMG 3730 / NBRC 12168 / NCIMB 10025 / NRRL B-2784 / 534).